An 883-amino-acid polypeptide reads, in one-letter code: uncharacterized protein (883 aa).

Residues 258-373 are disordered; that stretch reads INNQSDNQSN…NQFNKPDNEP (116 aa). Low complexity-rich tracts occupy residues 259–268, 277–317, and 324–333; these read NNQSDNQSNS, EPNG…SNSE, and NEPNTEPNTE. Over residues 334-347 the composition is skewed to polar residues; it reads SNGQSNSELNNQSD. Positions 348–368 are enriched in low complexity; that stretch reads NHPNNEPNSEPNNEPNNQFNK.

Belongs to the mimivirus L137 family.

This is an uncharacterized protein from Acanthamoeba polyphaga mimivirus (APMV).